We begin with the raw amino-acid sequence, 501 residues long: MIMFLSSLVTTFWEALHLKTLVLAVVTFLFLINILRSRHPKNYPPGPWRLPFVGNFFQIDTKQTHLVLQQFVKKYGNVFSLELGQSPVVVVSGLPLIKEMFTHLDQNFVNRFMTPVRERITGKNGLVVSNGQTWKEQRRLALMALRNFGLGKKSLEERIQEETHHLVEAIREEGGQPFNPHLKLINAVSNIICSVTFGERFDYEDCQFQELLQLLDETMHLMGSSAGQLYNGFPCIMKYLPGPHQKIFRNWGKLKLFVSHIVKKHEKDWNPDEPRDFIDAFLIEMQKDPDRTTSFNEENLISTTLDLFLGGTETTSSTLRWALLYMSSYPEIQENVQAEIDRVIGHKRQVSLSDRESMPYTNAVIHEVQRMGNIVPLNSSREVTVDTKFNGFHLPKGTMILTNLTALHRDPKEWATPEVFNPEHFLENGQFKKRESFLPFSMGKRACLGEQLAKSELFIFFSALMQKFTFKPPINEKLSLKFRMGLILSPASYRICAIPRV.

C447 contacts heme.

Belongs to the cytochrome P450 family. Requires heme as cofactor.

The protein localises to the endoplasmic reticulum membrane. The protein resides in the microsome membrane. It carries out the reaction an organic molecule + reduced [NADPH--hemoprotein reductase] + O2 = an alcohol + oxidized [NADPH--hemoprotein reductase] + H2O + H(+). This is Cytochrome P450 2J5 (Cyp2j5) from Mus musculus (Mouse).